Consider the following 754-residue polypeptide: Probable galactinol--sucrose galactosyltransferase 1 (754 aa).

This sequence belongs to the glycosyl hydrolases 36 family.

It carries out the reaction alpha-D-galactosyl-(1-&gt;3)-1D-myo-inositol + sucrose = raffinose + myo-inositol. Functionally, transglycosidase operating by a ping-pong reaction mechanism. Involved in the synthesis of raffinose, a major soluble carbohydrate in seeds, roots and tubers. This chain is Probable galactinol--sucrose galactosyltransferase 1 (RFS1), found in Arabidopsis thaliana (Mouse-ear cress).